Here is a 363-residue protein sequence, read N- to C-terminus: UV excision repair protein RAD23 homolog A (363 aa).

Positions 1–81 constitute a Ubiquitin-like domain; the sequence is MAVTITLKTL…VVVMVTKTKA (81 aa). A disordered region spans residues 81 to 160; the sequence is AGQGTSAPPE…EDAASTLVTG (80 aa). Low complexity predominate over residues 85–103; it reads TSAPPEASPTAAPESSTSF. Residue lysine 122 forms a Glycyl lysine isopeptide (Lys-Gly) (interchain with G-Cter in ubiquitin) linkage. A phosphoserine mark is found at serine 123, serine 128, serine 133, serine 136, and serine 138. Residues 126-147 show a composition bias toward low complexity; sequence EESAPTTSPESVSGSVPSSGSS. Residues 161–201 enclose the UBA 1 domain; that stretch reads SEYETMLTEIMSMGYERERVVAALRASYNNPHRAVEYLLTG. The interval 203–227 is disordered; sequence PGSPEPEHGSVQESQVSEQPATEAA. Position 205 is a phosphoserine (serine 205). Positions 213–222 are enriched in polar residues; it reads VQESQVSEQP. Residues serine 295 and serine 357 each carry the phosphoserine modification. The UBA 2 domain occupies 318 to 358; it reads PQEKEAIERLKALGFPESLVIQAYFACEKNENLAANFLLSQ. The interval 319–363 is HIV-1 vpr binding; the sequence is QEKEAIERLKALGFPESLVIQAYFACEKNENLAANFLLSQNFDDE.

Belongs to the RAD23 family. Interacts with XPC; the interaction is suggesting the existence of a functional equivalent variant XPC complex. Interacts with PSMD4 and PSMC5. Interacts with ATXN3. Interacts with UBQLN2. As to quaternary structure, (Microbial infection) Interacts with HIV-1 Vpr.

It is found in the nucleus. Its function is as follows. Multiubiquitin chain receptor involved in modulation of proteasomal degradation. Binds to 'Lys-48'-linked polyubiquitin chains in a length-dependent manner and with a lower affinity to 'Lys-63'-linked polyubiquitin chains. Proposed to be capable to bind simultaneously to the 26S proteasome and to polyubiquitinated substrates and to deliver ubiquitinated proteins to the proteasome. Functionally, involved in nucleotide excision repair and is thought to be functional equivalent for RAD23B in global genome nucleotide excision repair (GG-NER) by association with XPC. In vitro, the XPC:RAD23A dimer has NER activity. Can stabilize XPC. (Microbial infection) Involved in Vpr-dependent replication of HIV-1 in non-proliferating cells and primary macrophages. Required for the association of HIV-1 Vpr with the host proteasome. This chain is UV excision repair protein RAD23 homolog A (RAD23A), found in Homo sapiens (Human).